We begin with the raw amino-acid sequence, 403 residues long: Phosphoglycerate kinase (403 aa).

Residues 21–23, arginine 36, 59–62, arginine 119, and arginine 159 each bind substrate; these read DFN and HLGR. ATP is bound by residues lysine 214, glycine 301, glutamate 332, and 359–362; that span reads GGDS.

Belongs to the phosphoglycerate kinase family. As to quaternary structure, monomer.

It is found in the cytoplasm. It carries out the reaction (2R)-3-phosphoglycerate + ATP = (2R)-3-phospho-glyceroyl phosphate + ADP. It functions in the pathway carbohydrate degradation; glycolysis; pyruvate from D-glyceraldehyde 3-phosphate: step 2/5. The polypeptide is Phosphoglycerate kinase (Lactobacillus gasseri (strain ATCC 33323 / DSM 20243 / BCRC 14619 / CIP 102991 / JCM 1131 / KCTC 3163 / NCIMB 11718 / NCTC 13722 / AM63)).